The primary structure comprises 708 residues: Putative adhesion G protein-coupled receptor F2P (708 aa).

Residues 1–451 (MGLTAYGNRR…ESLILTYITY (451 aa)) lie on the Extracellular side of the membrane. 7 N-linked (GlcNAc...) asparagine glycosylation sites follow: Asn-21, Asn-220, Asn-252, Asn-260, Asn-305, Asn-313, and Asn-358. Residues 293-442 (MGTTISGDNI…SILMSPHILE (150 aa)) form the GAIN-B domain. 2 cysteine pairs are disulfide-bonded: Cys-394–Cys-421 and Cys-409–Cys-423. The GPS stretch occupies residues 394–442 (CVGWHSVENRWDQQACKMIQENSQQAVCKCRPSKLFTSFSILMSPHILE). The chain crosses the membrane as a helical span at residues 452–472 (VGLGISICSLILCLSIEVLVW). The Cytoplasmic portion of the chain corresponds to 473–487 (SQVTKTEITYLRHVC). Residues 488–508 (IVNIAATLLMADVWFIVASFL) traverse the membrane as a helical segment. Residues 509-530 (SGPITHHKGCVAATFFVHFFYL) lie on the Extracellular side of the membrane. The helical transmembrane segment at 531 to 551 (SVFFWMLAKALLILYGIMIVF) threads the bilayer. Topologically, residues 552-557 (HTLPKS) are cytoplasmic. Residues 558 to 578 (VLVASLFSVGYGCPLAIAAIT) form a helical membrane-spanning segment. Residues 579 to 606 (VAATEPGKGYLRPEICWLNWDMTKALLA) are Extracellular-facing. Residues 607–627 (FVIPALAIVVVNLITVTLVIV) form a helical membrane-spanning segment. Over 628–650 (KTQRAAIGNSMFQEVRAIVRISK) the chain is Cytoplasmic. A helical transmembrane segment spans residues 651–671 (NIAILTPLLGLTWGFGVATVI). At 672–674 (DDR) the chain is on the extracellular side. A helical transmembrane segment spans residues 675-695 (SLAFHIIFSLLNAFQVSPDAS). Residues 696–708 (DQVQSERIHEDVL) lie on the Cytoplasmic side of the membrane.

Belongs to the G-protein coupled receptor 2 family. Adhesion G-protein coupled receptor (ADGR) subfamily. As to expression, high expression in kidney. Up-regulated in lung adenocarcinomas and prostate cancers.

It is found in the membrane. Functionally, orphan receptor. The polypeptide is Putative adhesion G protein-coupled receptor F2P (Homo sapiens (Human)).